Reading from the N-terminus, the 295-residue chain is Acetylglutamate kinase (295 aa).

Substrate-binding positions include 66 to 67 (GG), R88, and N193.

The protein belongs to the acetylglutamate kinase family. ArgB subfamily.

It localises to the cytoplasm. It carries out the reaction N-acetyl-L-glutamate + ATP = N-acetyl-L-glutamyl 5-phosphate + ADP. The protein operates within amino-acid biosynthesis; L-arginine biosynthesis; N(2)-acetyl-L-ornithine from L-glutamate: step 2/4. Catalyzes the ATP-dependent phosphorylation of N-acetyl-L-glutamate. The chain is Acetylglutamate kinase from Allorhizobium ampelinum (strain ATCC BAA-846 / DSM 112012 / S4) (Agrobacterium vitis (strain S4)).